Reading from the N-terminus, the 253-residue chain is Bridging integrator 3 (253 aa).

The region spanning 9–232 (GQPKKQIVPK…LDQPGHSDEQ (224 aa)) is the BAR domain. Coiled coils occupy residues 18 to 51 (KTVERDFEREYGKLQQLEEQTRRLQKDMKKSTDA), 120 to 152 (SLNMAVKRREQALQDYRRLQAKVEKYEEKEKTG), and 231 to 247 (EQRERENEAKLSELRAL). A disordered region spans residues 220-240 (SHQLDQPGHSDEQRERENEAK). Residues 227–240 (GHSDEQRERENEAK) show a composition bias toward basic and acidic residues.

As to expression, ubiquitously expressed except in brain.

The protein localises to the cytoplasm. Its subcellular location is the cytoskeleton. In terms of biological role, involved in cytokinesis and septation where it has a role in the localization of F-actin. This is Bridging integrator 3 (BIN3) from Homo sapiens (Human).